Consider the following 491-residue polypeptide: ATP-dependent protease ATPase subunit HslU (491 aa).

ATP contacts are provided by residues I34, 76-81, D296, E364, and R436; that span reads GVGKTE.

It belongs to the ClpX chaperone family. HslU subfamily. In terms of assembly, a double ring-shaped homohexamer of HslV is capped on each side by a ring-shaped HslU homohexamer. The assembly of the HslU/HslV complex is dependent on binding of ATP.

It is found in the cytoplasm. ATPase subunit of a proteasome-like degradation complex; this subunit has chaperone activity. The binding of ATP and its subsequent hydrolysis by HslU are essential for unfolding of protein substrates subsequently hydrolyzed by HslV. HslU recognizes the N-terminal part of its protein substrates and unfolds these before they are guided to HslV for hydrolysis. This chain is ATP-dependent protease ATPase subunit HslU, found in Chlorobaculum tepidum (strain ATCC 49652 / DSM 12025 / NBRC 103806 / TLS) (Chlorobium tepidum).